Here is a 495-residue protein sequence, read N- to C-terminus: ATP-dependent RNA helicase dbp3 (495 aa).

The span at 1-14 shows a compositional bias: basic and acidic residues; sequence MAKRELQDKGSTEH. A disordered region spans residues 1–49; the sequence is MAKRELQDKGSTEHRAKKKSRNEKHTKKAEDSQASAQSSETQYTDPKEP. Residues 15–27 are compositionally biased toward basic residues; the sequence is RAKKKSRNEKHTK. Residues 97–105 carry the Q motif motif; that stretch reads SFTSPTAIQ. The Helicase ATP-binding domain occupies 109–284; it reads WPFLFSGRDV…ATFMTSPVTV (176 aa). 122 to 129 is an ATP binding site; that stretch reads AETGSGKT. The DEAD box motif lies at 231-234; the sequence is DEAD. The Helicase C-terminal domain occupies 315-464; the sequence is RLVQLLNKYQ…DVPEDLLKFG (150 aa).

It belongs to the DEAD box helicase family. DDX5/DBP2 subfamily.

The protein localises to the nucleus. It is found in the nucleolus. The enzyme catalyses ATP + H2O = ADP + phosphate + H(+). Functionally, ATP-dependent RNA helicase required for 60S ribosomal subunit synthesis. Involved in efficient pre-rRNA processing, predominantly at site A3, which is necessary for the normal formation of 25S and 5.8S rRNAs. The chain is ATP-dependent RNA helicase dbp3 (dbp3) from Aspergillus niger (strain ATCC MYA-4892 / CBS 513.88 / FGSC A1513).